Reading from the N-terminus, the 642-residue chain is ATP-dependent zinc metalloprotease FtsH (642 aa).

Residues 1–6 (MGRFTK) lie on the Cytoplasmic side of the membrane. The chain crosses the membrane as a helical span at residues 7-27 (NIVLYLLIIAAFVIAIDAFSG). Topologically, residues 28–101 (QSANKSELSY…TAAPPEQPAW (74 aa)) are extracellular. The chain crosses the membrane as a helical span at residues 102–122 (WMSLLGSAIPIIILVVLFFFI). Residues 123–642 (MQQTQGGGGR…LSEASSNEIK (520 aa)) lie on the Cytoplasmic side of the membrane. 194–201 (GPPGTGKT) is a binding site for ATP. Residue histidine 416 coordinates Zn(2+). Glutamate 417 is an active-site residue. Histidine 420 and aspartate 492 together coordinate Zn(2+). Over residues 597–610 (TTKEPEAEEPKVAS) the composition is skewed to basic and acidic residues. The interval 597–642 (TTKEPEAEEPKVASEADSSIVPEGVDAKKTTSTVADLSEASSNEIK) is disordered. A compositionally biased stretch (polar residues) spans 626–642 (TTSTVADLSEASSNEIK).

This sequence in the central section; belongs to the AAA ATPase family. The protein in the C-terminal section; belongs to the peptidase M41 family. Homohexamer. Zn(2+) serves as cofactor.

The protein localises to the cell membrane. Its function is as follows. Acts as a processive, ATP-dependent zinc metallopeptidase for both cytoplasmic and membrane proteins. Plays a role in the quality control of integral membrane proteins. The polypeptide is ATP-dependent zinc metalloprotease FtsH (Veillonella parvula (strain ATCC 10790 / DSM 2008 / CCUG 5123 / JCM 12972 / NCTC 11810 / Te3) (Veillonella alcalescens)).